The sequence spans 20 residues: Cuticle-degrading protease-like protein (20 aa).

The disordered stretch occupies residues 1–20; sequence AIVEQQGAPXGLGRIINKXK.

This sequence belongs to the peptidase S8 family.

Its subcellular location is the secreted. Functionally, capable of breaching the insect cuticle. The polypeptide is Cuticle-degrading protease-like protein (Metacordyceps chlamydosporia (Nematophagous fungus)).